The chain runs to 265 residues: Hydroxyethylthiazole kinase (265 aa).

M50 contacts substrate. The ATP site is built by R125 and T171. G198 contacts substrate.

It belongs to the Thz kinase family. Requires Mg(2+) as cofactor.

It carries out the reaction 5-(2-hydroxyethyl)-4-methylthiazole + ATP = 4-methyl-5-(2-phosphooxyethyl)-thiazole + ADP + H(+). Its pathway is cofactor biosynthesis; thiamine diphosphate biosynthesis; 4-methyl-5-(2-phosphoethyl)-thiazole from 5-(2-hydroxyethyl)-4-methylthiazole: step 1/1. Catalyzes the phosphorylation of the hydroxyl group of 4-methyl-5-beta-hydroxyethylthiazole (THZ). The protein is Hydroxyethylthiazole kinase of Salmonella schwarzengrund (strain CVM19633).